The primary structure comprises 147 residues: Small ribosomal subunit protein uS12 (147 aa).

The protein belongs to the universal ribosomal protein uS12 family. Part of the 30S ribosomal subunit.

Functionally, with S4 and S5 plays an important role in translational accuracy. Located at the interface of the 30S and 50S subunits. The sequence is that of Small ribosomal subunit protein uS12 from Staphylothermus marinus (strain ATCC 43588 / DSM 3639 / JCM 9404 / F1).